A 343-amino-acid chain; its full sequence is CRISPR-associated endonuclease Cas1 1 (343 aa).

Residues glutamate 166, histidine 234, and glutamate 249 each contribute to the Mn(2+) site.

This sequence belongs to the CRISPR-associated endonuclease Cas1 family. In terms of assembly, homodimer, forms a heterotetramer with a Cas2 homodimer. It depends on Mg(2+) as a cofactor. Mn(2+) is required as a cofactor.

CRISPR (clustered regularly interspaced short palindromic repeat), is an adaptive immune system that provides protection against mobile genetic elements (viruses, transposable elements and conjugative plasmids). CRISPR clusters contain spacers, sequences complementary to antecedent mobile elements, and target invading nucleic acids. CRISPR clusters are transcribed and processed into CRISPR RNA (crRNA). Acts as a dsDNA endonuclease. Involved in the integration of spacer DNA into the CRISPR cassette. This Moorella thermoacetica (strain ATCC 39073 / JCM 9320) protein is CRISPR-associated endonuclease Cas1 1.